We begin with the raw amino-acid sequence, 203 residues long: MAASIIPKEVSLDETGHIKLFNKFPFEGVEVKDISLVDYITIGNGQPLPHTAGRFQTKRFRKARCFIVERLTNSLMMNGRNNGKKLLATRIVKHAFEIIALLTDQNPLQVLVDAVAACGPREDSTRIGSAGTVRRQAVDVSPLRRVNQALALITIGAREAAFRNVKSISECLAEEIINAAKGSSNSYAIKKKDELERVAKSNR.

This sequence belongs to the universal ribosomal protein uS7 family. As to quaternary structure, component of the small ribosomal subunit (SSU). Mature yeast ribosomes consist of a small (40S) and a large (60S) subunit. The 40S small subunit contains 1 molecule of ribosomal RNA (18S rRNA) and at least 33 different proteins. The large 60S subunit contains 3 rRNA molecules (25S, 5.8S and 5S rRNA) and at least 46 different proteins.

It localises to the cytoplasm. In terms of biological role, component of the ribosome, a large ribonucleoprotein complex responsible for the synthesis of proteins in the cell. The small ribosomal subunit (SSU) binds messenger RNAs (mRNAs) and translates the encoded message by selecting cognate aminoacyl-transfer RNA (tRNA) molecules. The large subunit (LSU) contains the ribosomal catalytic site termed the peptidyl transferase center (PTC), which catalyzes the formation of peptide bonds, thereby polymerizing the amino acids delivered by tRNAs into a polypeptide chain. The nascent polypeptides leave the ribosome through a tunnel in the LSU and interact with protein factors that function in enzymatic processing, targeting, and the membrane insertion of nascent chains at the exit of the ribosomal tunnel. The sequence is that of Small ribosomal subunit protein uS7B (rps502) from Schizosaccharomyces pombe (strain 972 / ATCC 24843) (Fission yeast).